The primary structure comprises 198 residues: Elongation factor Ts (198 aa).

Residues Thr-81–Val-84 form an involved in Mg(2+) ion dislocation from EF-Tu region.

This sequence belongs to the EF-Ts family.

The protein resides in the cytoplasm. In terms of biological role, associates with the EF-Tu.GDP complex and induces the exchange of GDP to GTP. It remains bound to the aminoacyl-tRNA.EF-Tu.GTP complex up to the GTP hydrolysis stage on the ribosome. This is Elongation factor Ts from Leptospira biflexa serovar Patoc (strain Patoc 1 / Ames).